A 329-amino-acid polypeptide reads, in one-letter code: Transcription factor RF2b (329 aa).

Disordered stretches follow at residues 1–24 (MQEPKHTDPAAMRGAHHRRARSEV) and 62–97 (SSGPAAAGGSDRDRAAETSSPPRPKHRHSSSVDGSG). Residues 132–195 (DPKRAKRILA…TGLSAENAEL (64 aa)) form the bZIP domain. Residues 134 to 155 (KRAKRILANRQSAARSKERKAR) form a basic motif region. The segment at 160 to 174 (LERKVQTLQTEATTL) is leucine-zipper. The interval 260–303 (RQNGGTQLPPQFQPPRPNVPNHMLSHPNGLQDIMQQDPLGRLQG) is disordered.

Belongs to the bZIP family. As to quaternary structure, binds DNA as a homodimer or as a heterodimer with RF2a. The heterodimer binds stronger to DNA than the homodimer. In terms of tissue distribution, expressed at high levels in roots, low level in leaf sheath, but not in leaf blade. Predominantly expressed in vascular tissues.

It localises to the nucleus. Its function is as follows. Transcription factor probably involved in vascular development and shoot tissue organization. Binds to the DNA sequence 5'-CCGAGTGTGCCCCTGG-3' present in the promoter region Box II of the phloem-specific rice tungro bacilliform virus (RTBV) promoter. May regulate tissue-specific expression of the RTBV promoter and virus replication. The polypeptide is Transcription factor RF2b (RF2b) (Oryza sativa subsp. japonica (Rice)).